Reading from the N-terminus, the 254-residue chain is 5-oxoprolinase subunit A 1 (254 aa).

The protein belongs to the LamB/PxpA family. In terms of assembly, forms a complex composed of PxpA, PxpB and PxpC.

It carries out the reaction 5-oxo-L-proline + ATP + 2 H2O = L-glutamate + ADP + phosphate + H(+). Functionally, catalyzes the cleavage of 5-oxoproline to form L-glutamate coupled to the hydrolysis of ATP to ADP and inorganic phosphate. This Burkholderia pseudomallei (strain K96243) protein is 5-oxoprolinase subunit A 1.